Reading from the N-terminus, the 278-residue chain is MADS-box transcription factor PHERES 2 (278 aa).

Residues 1 to 60 enclose the MADS-box domain; the sequence is MKRKMKLSLIENSVSRKTTFTKRKKGMTKKLTELVTLCGVEACAVVYSPFNSIPEAWPSR.

In terms of assembly, interacts with AGL61/DIANA and AGL62. Male gametophyte, embryo and endosperm.

It is found in the nucleus. Its function is as follows. Probable transcription factor involved in the development of gametophytes and seeds. This chain is MADS-box transcription factor PHERES 2 (PHE2), found in Arabidopsis thaliana (Mouse-ear cress).